Here is a 443-residue protein sequence, read N- to C-terminus: MSEMTPREIVSELNKHIIGQDNAKRSVAIALRNRWRRMQLNEELRHEVTPKNILMIGPTGVGKTEIARRLAKLANAPFIKVEATKFTEVGYVGKEVDSIIRDLTDSAIKMVRVQSIEKNRYRAEEMAEERILDALIPPAKNNWGQAEQQQEPSAARQAFRKKLREGQLDDKEIEINLAAAPMGVEIMAPPGMEEMTSQLQSMFQNLGGQKQKPRKLKIKDAMKLLIEEEAAKLVNPEELKQEAIDAVEQHGIVFIDEIDKICKRGESSGPDVSREGVQRDLLPLVEGCTVSTKHGMVKTDHILFIASGAFQVAKPSDLIPELQGRLPIRVELKALTTEDFERILTEPNASVTVQYKALMATEGVDIEFTESGIKRIAEAAWQVNETTENIGARRLHTVLERLMEDISYDASDLNGQSITIDAEYVSKHLDALVADEDLSRFIL.

ATP contacts are provided by residues I18, 60–65, D256, E321, and R393; that span reads GVGKTE.

It belongs to the ClpX chaperone family. HslU subfamily. In terms of assembly, a double ring-shaped homohexamer of HslV is capped on each side by a ring-shaped HslU homohexamer. The assembly of the HslU/HslV complex is dependent on binding of ATP.

It localises to the cytoplasm. Functionally, ATPase subunit of a proteasome-like degradation complex; this subunit has chaperone activity. The binding of ATP and its subsequent hydrolysis by HslU are essential for unfolding of protein substrates subsequently hydrolyzed by HslV. HslU recognizes the N-terminal part of its protein substrates and unfolds these before they are guided to HslV for hydrolysis. This chain is ATP-dependent protease ATPase subunit HslU, found in Citrobacter koseri (strain ATCC BAA-895 / CDC 4225-83 / SGSC4696).